The sequence spans 673 residues: Kinesin-like protein KIFC1 (673 aa).

Residues S6, S26, S31, and S33 each carry the phosphoserine modification. Disordered stretches follow at residues 23-94 and 109-136; these read KAPS…TGPR and VPAVPVQKSGTSGVPPMAGGKKPSKRPA. Residues 60–86 show a composition bias toward polar residues; that stretch reads TKITTSHPRVPSLTTVPQTQGQTTAQK. Residues 142-306 are a coiled coil; it reads QLCDLNAELK…RRRLHNQLQE (165 aa). The Kinesin motor domain maps to 310-663; it reads NIRVFCRVRP…LRFASKVNQC (354 aa). Residues 325–372 are disordered; it reads PTPPPGLLLFPSGPGGPSDPPTRLSLSRSDERRGTLSGAPAPPTRHDF. T359 bears the Phosphothreonine mark. Residue 410 to 417 participates in ATP binding; it reads GQTGSGKT.

The protein belongs to the TRAFAC class myosin-kinesin ATPase superfamily. Kinesin family. NCD subfamily. In terms of assembly, binds NUBP1 and NUBP2. Interacts with PPP1R42.

The protein localises to the nucleus. The protein resides in the cytoplasm. It is found in the cytoskeleton. Its subcellular location is the microtubule organizing center. It localises to the centrosome. The protein localises to the spindle. The protein resides in the early endosome. Functionally, minus end-directed microtubule-dependent motor required for bipolar spindle formation. May contribute to movement of early endocytic vesicles. Regulates cilium formation and structure. The chain is Kinesin-like protein KIFC1 (KIFC1) from Homo sapiens (Human).